The primary structure comprises 95 residues: UPF0473 protein BPUM_2377 (95 aa).

Belongs to the UPF0473 family.

This Bacillus pumilus (strain SAFR-032) protein is UPF0473 protein BPUM_2377.